The chain runs to 211 residues: Holliday junction resolvase RecU (211 aa).

Residues threonine 95, aspartate 97, glutamate 110, and glutamine 129 each contribute to the Mg(2+) site.

It belongs to the RecU family. The cofactor is Mg(2+).

The protein localises to the cytoplasm. It carries out the reaction Endonucleolytic cleavage at a junction such as a reciprocal single-stranded crossover between two homologous DNA duplexes (Holliday junction).. Its function is as follows. Endonuclease that resolves Holliday junction intermediates in genetic recombination. Cleaves mobile four-strand junctions by introducing symmetrical nicks in paired strands. Promotes annealing of linear ssDNA with homologous dsDNA. Required for DNA repair, homologous recombination and chromosome segregation. In Lactobacillus acidophilus (strain ATCC 700396 / NCK56 / N2 / NCFM), this protein is Holliday junction resolvase RecU.